The chain runs to 165 residues: Ubiquitin-like protein ISG15 (165 aa).

Ubiquitin-like domains lie at 2-78 and 79-157; these read GWDL…VDKC and DEPL…LRGG. Cysteine 78 carries the post-translational modification S-nitrosocysteine; alternate. The LRLRGG motif lies at 152–157; that stretch reads LRLRGG. The tract at residues 153-157 is involved in the ligation of specific target proteins; that stretch reads RLRGG. A Glycyl lysine isopeptide (Gly-Lys) (interchain with K-? in acceptor proteins) cross-link involves residue glycine 157. The propeptide at 158 to 165 is removed in mature form; the sequence is GTEPGGRS.

As to quaternary structure, homodimer; disulfide-linked. Interacts with, and is conjugated to its targets by UBE1L (E1 enzyme) and UBE2E2 (E2 enzyme). Interacts with NEDD4. Interacts with PARP12; this interaction inhibits PINK1/Parkin-dependent mitophagy. In terms of assembly, (Microbial infection) Interacts with vaccinia virus protein E3. (Microbial infection) Interaction with influenza B NS1 protein inhibits its conjugation. As to quaternary structure, (Microbial infection) Interacts (via C-terminus) with Crimean-Congo hemorrhagic fever virus (CCHFV) RNA-directed RNA polymerase L (via N-terminus); the deISGylase activity of the viral protein interferes with antiviral signaling pathways mediated by NF-kappaB and IRF signalings. In terms of assembly, (Microbial infection) Interacts with human cytomegalovirus protein UL26; this interaction inhibits global protein ISGylation. S-nitrosylation decreases its dimerization, thereby increasing the availability as well as the solubility of monomeric ISG15 for its conjugation to cellular proteins. Post-translationally, induced as an inactive, precursor protein that is cleaved by specific proteases to expose the C-terminal diglycine (LRLRGG) motif. This motif is essential not only for its conjugation to substrates but also for its recognition by the relevant processing proteases. As to expression, detected in lymphoid cells, striated and smooth muscle, several epithelia and neurons. Expressed in neutrophils, monocytes and lymphocytes. Enhanced expression seen in pancreatic adenocarcinoma, endometrial cancer, and bladder cancer, as compared to non-cancerous tissue. In bladder cancer, the increase in expression exhibits a striking positive correlation with more advanced stages of the disease.

It is found in the cytoplasm. It localises to the secreted. Ubiquitin-like protein which plays a key role in the innate immune response to viral infection either via its conjugation to a target protein (ISGylation) or via its action as a free or unconjugated protein. ISGylation involves a cascade of enzymatic reactions involving E1, E2, and E3 enzymes which catalyze the conjugation of ISG15 to a lysine residue in the target protein. Its target proteins include IFIT1, MX1/MxA, PPM1B, UBE2L6, UBA7, CHMP5, CHMP2A, CHMP4B and CHMP6. Isgylation of the viral sensor IFIH1/MDA5 promotes IFIH1/MDA5 oligomerization and triggers activation of innate immunity against a range of viruses, including coronaviruses, flaviviruses and picornaviruses. Can also isgylate: EIF2AK2/PKR which results in its activation, RIGI which inhibits its function in antiviral signaling response, EIF4E2 which enhances its cap structure-binding activity and translation-inhibition activity, UBE2N and UBE2E1 which negatively regulates their activity, IRF3 which inhibits its ubiquitination and degradation and FLNB which prevents its ability to interact with the upstream activators of the JNK cascade thereby inhibiting IFNA-induced JNK signaling. Exhibits antiviral activity towards both DNA and RNA viruses, including influenza A, HIV-1 and Ebola virus. Restricts HIV-1 and ebola virus via disruption of viral budding. Inhibits the ubiquitination of HIV-1 Gag and host TSG101 and disrupts their interaction, thereby preventing assembly and release of virions from infected cells. Inhibits Ebola virus budding mediated by the VP40 protein by disrupting ubiquitin ligase activity of NEDD4 and its ability to ubiquitinate VP40. ISGylates influenza A virus NS1 protein which causes a loss of function of the protein and the inhibition of virus replication. The secreted form of ISG15 can: induce natural killer cell proliferation, act as a chemotactic factor for neutrophils and act as a IFN-gamma-inducing cytokine playing an essential role in antimycobacterial immunity. The secreted form acts through the integrin ITGAL/ITGB2 receptor to initiate activation of SRC family tyrosine kinases including LYN, HCK and FGR which leads to secretion of IFNG and IL10; the interaction is mediated by ITGAL. In Homo sapiens (Human), this protein is Ubiquitin-like protein ISG15.